Reading from the N-terminus, the 552-residue chain is 3-hydroxy-3-methylglutaryl-coenzyme A reductase 1 (552 aa).

2 stretches are compositionally biased toward low complexity: residues Q79–Q99 and Q112–Q122. Residues Q79–P138 are disordered. Positions T123–K132 are enriched in polar residues. The active-site Charge relay system is E237. N288 is a glycosylation site (N-linked (GlcNAc...) asparagine). The active-site Charge relay system is the K369. N375 is a glycosylation site (N-linked (GlcNAc...) asparagine). D445 serves as the catalytic Charge relay system. H543 serves as the catalytic Proton donor.

Belongs to the HMG-CoA reductase family.

It localises to the endoplasmic reticulum membrane. It carries out the reaction (R)-mevalonate + 2 NADP(+) + CoA = (3S)-3-hydroxy-3-methylglutaryl-CoA + 2 NADPH + 2 H(+). Its pathway is metabolic intermediate biosynthesis; (R)-mevalonate biosynthesis; (R)-mevalonate from acetyl-CoA: step 3/3. In terms of biological role, this transmembrane glycoprotein is involved in the control of cholesterol biosynthesis. It is the rate-limiting enzyme of the sterol biosynthesis. This is 3-hydroxy-3-methylglutaryl-coenzyme A reductase 1 (hmgA) from Dictyostelium discoideum (Social amoeba).